A 149-amino-acid chain; its full sequence is MEIILKQDFKGLGYKNEIVKVKPGYARNYLIPQGFALVANETNKKIAQENAKQMAHKMAKRKQDAESIANRLSQLAIKIKAKVGEKGKIFGAITPIQIADALKEQTGYIADRRDISFEKPIKTLGTHKAIIKLHKEVVLTLSFEVIAEE.

It belongs to the bacterial ribosomal protein bL9 family.

Functionally, binds to the 23S rRNA. The protein is Large ribosomal subunit protein bL9 of Amoebophilus asiaticus (strain 5a2).